Reading from the N-terminus, the 295-residue chain is Ribosomal protein L11 methyltransferase (295 aa).

Residues Thr146, Gly167, Asp189, and Asn231 each coordinate S-adenosyl-L-methionine.

It belongs to the methyltransferase superfamily. PrmA family.

It localises to the cytoplasm. The catalysed reaction is L-lysyl-[protein] + 3 S-adenosyl-L-methionine = N(6),N(6),N(6)-trimethyl-L-lysyl-[protein] + 3 S-adenosyl-L-homocysteine + 3 H(+). Methylates ribosomal protein L11. In Vibrio cholerae serotype O1 (strain M66-2), this protein is Ribosomal protein L11 methyltransferase.